We begin with the raw amino-acid sequence, 575 residues long: Kelch repeat and BTB domain-containing protein 8 (575 aa).

Residues 23–91 form the BTB domain; that stretch reads TDIVVEVDHG…AYTSRVILTE (69 aa). The region spanning 126-228 is the BACK domain; that stretch reads SIGVFIFADH…MEDAFIEKIP (103 aa). 5 Kelch repeats span residues 310-364, 365-415, 417-455, 457-506, and 516-562; these read DIYI…YCCG, KMYA…EHKE, IYVL…VYKD, IYYI…LFQN, and QVTV…FECA.

It belongs to the KBTBD8 family. As to quaternary structure, component of the BCR(KBTBD8) E3 ubiquitin ligase complex, at least composed of CUL3, KBTBD8 and RBX1.

It is found in the cytoplasm. The protein resides in the cytoskeleton. It localises to the spindle. Its subcellular location is the golgi apparatus. In terms of biological role, substrate-specific adapter of a BCR (BTB-CUL3-RBX1) E3 ubiquitin ligase complex that acts as a regulator of neural crest specification. The BCR(KBTBD8) complex acts by mediating monoubiquitination of NOLC1 and TCOF1: monoubiquitination promotes the formation of a NOLC1-TCOF1 complex that acts as a platform to connect RNA polymerase I with enzymes responsible for ribosomal processing and modification, leading to remodel the translational program of differentiating cells in favor of neural crest specification. In Rattus norvegicus (Rat), this protein is Kelch repeat and BTB domain-containing protein 8.